The sequence spans 111 residues: Nucleoid-associated protein CYA_1369 (111 aa).

This sequence belongs to the YbaB/EbfC family. In terms of assembly, homodimer.

It is found in the cytoplasm. The protein localises to the nucleoid. Its function is as follows. Binds to DNA and alters its conformation. May be involved in regulation of gene expression, nucleoid organization and DNA protection. The chain is Nucleoid-associated protein CYA_1369 from Synechococcus sp. (strain JA-3-3Ab) (Cyanobacteria bacterium Yellowstone A-Prime).